The following is a 307-amino-acid chain: tRNA dimethylallyltransferase (307 aa).

8-15 (GPTGSGKS) is a binding site for ATP. Residue 10-15 (TGSGKS) participates in substrate binding. The interval 33 to 36 (DSLQ) is interaction with substrate tRNA.

It belongs to the IPP transferase family. As to quaternary structure, monomer. Mg(2+) is required as a cofactor.

The catalysed reaction is adenosine(37) in tRNA + dimethylallyl diphosphate = N(6)-dimethylallyladenosine(37) in tRNA + diphosphate. Catalyzes the transfer of a dimethylallyl group onto the adenine at position 37 in tRNAs that read codons beginning with uridine, leading to the formation of N6-(dimethylallyl)adenosine (i(6)A). In Solibacter usitatus (strain Ellin6076), this protein is tRNA dimethylallyltransferase.